We begin with the raw amino-acid sequence, 125 residues long: Neuraminyllactose-binding hemagglutinin (125 aa).

Positions 92-97 (KRTIQK) are N-acetyl-neuraminyl-alpha(2,3)-lactose binding motif.

The protein localises to the cell outer membrane. The protein is Neuraminyllactose-binding hemagglutinin (hpaA) of Helicobacter pylori (Campylobacter pylori).